Reading from the N-terminus, the 331-residue chain is Ornithine carbamoyltransferase (331 aa).

Residues 55–58 (STRT), glutamine 82, arginine 106, and 133–136 (HPTQ) each bind carbamoyl phosphate. L-ornithine-binding positions include asparagine 166, aspartate 230, and 234–235 (SM). Residues 272 to 273 (CL) and arginine 317 each bind carbamoyl phosphate.

It belongs to the aspartate/ornithine carbamoyltransferase superfamily. OTCase family.

The protein resides in the cytoplasm. The catalysed reaction is carbamoyl phosphate + L-ornithine = L-citrulline + phosphate + H(+). It participates in amino-acid biosynthesis; L-arginine biosynthesis; L-arginine from L-ornithine and carbamoyl phosphate: step 1/3. In terms of biological role, reversibly catalyzes the transfer of the carbamoyl group from carbamoyl phosphate (CP) to the N(epsilon) atom of ornithine (ORN) to produce L-citrulline. This Neisseria meningitidis serogroup A / serotype 4A (strain DSM 15465 / Z2491) protein is Ornithine carbamoyltransferase (argF).